We begin with the raw amino-acid sequence, 437 residues long: MPIIEESTMTYAEACRYFPGGVNSPIRACIPVGILPPIVSSAHRDIFIDSFGKTFIDFCGSWGSLIHGHGHPKILDVICNSASQGTSYGLTSENEISLAATLFSCLEFEDHKVRFVSSGTEATMTAVRLACATTGRSIMIKFLGCYHGHADVLLKGISIDESNIHQVPHIVDTYFSGNPYLPLNLILPYNDIQIFKEVMLQVGERVACVIFEPIAINMGVVLPKPGFIEGVITISRRFAALTIMDEVVTGFRMGIRGVRSIMDVDSDITVYGKILGGGMPVAAFLAHHRIMDHLLPLGQVFQAGTLSGNPIAMAVGKASLELCREVDFYPKLENLAQSFFAPIEEVICHQGFPVSLVRAGSMFSFFFRETPPTNLREVQECDHQMFGVFYRHVFAQGVYLSPAPMEASFLSSVHSKENLAYTQNVLIDSLMKTFGSL.

K273 carries the N6-(pyridoxal phosphate)lysine modification.

It belongs to the class-III pyridoxal-phosphate-dependent aminotransferase family. HemL subfamily. Homodimer. Requires pyridoxal 5'-phosphate as cofactor.

It is found in the cytoplasm. It carries out the reaction (S)-4-amino-5-oxopentanoate = 5-aminolevulinate. It participates in porphyrin-containing compound metabolism; protoporphyrin-IX biosynthesis; 5-aminolevulinate from L-glutamyl-tRNA(Glu): step 2/2. The polypeptide is Glutamate-1-semialdehyde 2,1-aminomutase (Chlamydia abortus (strain DSM 27085 / S26/3) (Chlamydophila abortus)).